Reading from the N-terminus, the 423-residue chain is D-tagatose-1,6-bisphosphate aldolase subunit GatZ (423 aa).

It belongs to the GatZ/KbaZ family. GatZ subfamily. In terms of assembly, forms a complex with GatY.

It functions in the pathway carbohydrate metabolism; D-tagatose 6-phosphate degradation; D-glyceraldehyde 3-phosphate and glycerone phosphate from D-tagatose 6-phosphate: step 2/2. In terms of biological role, component of the tagatose-1,6-bisphosphate aldolase GatYZ that is required for full activity and stability of the Y subunit. Could have a chaperone-like function for the proper and stable folding of GatY. When expressed alone, GatZ does not show any aldolase activity. Is involved in the catabolism of galactitol. The protein is D-tagatose-1,6-bisphosphate aldolase subunit GatZ of Klebsiella pneumoniae subsp. pneumoniae (strain ATCC 700721 / MGH 78578).